We begin with the raw amino-acid sequence, 167 residues long: Urease accessory protein UreE (167 aa).

Residues 135 to 167 (SGAYGGGHHHSHSHHEGDEFHSKPRLHHFGGSQ) are disordered. The segment covering 157 to 167 (KPRLHHFGGSQ) has biased composition (basic residues).

It belongs to the UreE family.

It localises to the cytoplasm. Involved in urease metallocenter assembly. Binds nickel. Probably functions as a nickel donor during metallocenter assembly. This Nitrosococcus oceani (strain ATCC 19707 / BCRC 17464 / JCM 30415 / NCIMB 11848 / C-107) protein is Urease accessory protein UreE.